Here is a 351-residue protein sequence, read N- to C-terminus: Putative NBPF family member NBPF5 (351 aa).

Coiled coils occupy residues 10-43 (SERA…EKFL) and 69-115 (DSVL…KLRE). The segment at 157–285 (HLVHKLSPEN…VPPRHHDKSN (129 aa)) is disordered. Residues 165–179 (ENDEDEDEDEDDKDE) show a composition bias toward acidic residues. The region spanning 174-261 (EDDKDEEVEK…EEEEALNIPP (88 aa)) is the Olduvai domain. Residues 192-202 (EVQKTEEKEVP) are compositionally biased toward basic and acidic residues. Positions 214 to 226 (SNSHNPSNSNQPH) are enriched in low complexity. Composition is skewed to basic and acidic residues over residues 232 to 251 (TFKE…HPHD) and 264 to 273 (QNDHEEEEGK).

It belongs to the NBPF family. In terms of tissue distribution, expressed in brain and medulla.

Its subcellular location is the cytoplasm. This chain is Putative NBPF family member NBPF5, found in Homo sapiens (Human).